The chain runs to 102 residues: NADH-quinone oxidoreductase subunit K (102 aa).

A run of 3 helical transmembrane segments spans residues 5–25 (LSHFLIVAAMLFTIGVAGIIL), 30–50 (IIVVLMSVELILLSVNINLVS), and 62–82 (VFSLFVLTVAAAEAAIGLAIL).

Belongs to the complex I subunit 4L family. In terms of assembly, NDH-1 is composed of 14 different subunits. Subunits NuoA, H, J, K, L, M, N constitute the membrane sector of the complex.

It is found in the cell inner membrane. It catalyses the reaction a quinone + NADH + 5 H(+)(in) = a quinol + NAD(+) + 4 H(+)(out). Its function is as follows. NDH-1 shuttles electrons from NADH, via FMN and iron-sulfur (Fe-S) centers, to quinones in the respiratory chain. The immediate electron acceptor for the enzyme in this species is believed to be ubiquinone. Couples the redox reaction to proton translocation (for every two electrons transferred, four hydrogen ions are translocated across the cytoplasmic membrane), and thus conserves the redox energy in a proton gradient. This is NADH-quinone oxidoreductase subunit K from Methylocella silvestris (strain DSM 15510 / CIP 108128 / LMG 27833 / NCIMB 13906 / BL2).